A 907-amino-acid polypeptide reads, in one-letter code: DNA ligase 4 (907 aa).

Glu-273, Lys-275, Arg-280, Glu-333, Phe-378, Glu-438, Lys-443, Lys-460, and Lys-462 together coordinate ATP. The active-site N6-AMP-lysine intermediate is the Lys-275. Glu-333 contacts Mg(2+). Position 438 (Glu-438) interacts with Mg(2+). BRCT domains lie at 655-754 (PVSN…ESDI) and 800-906 (VPLF…HYQC).

This sequence belongs to the ATP-dependent DNA ligase family. The cofactor is Mg(2+).

It localises to the nucleus. The catalysed reaction is ATP + (deoxyribonucleotide)n-3'-hydroxyl + 5'-phospho-(deoxyribonucleotide)m = (deoxyribonucleotide)n+m + AMP + diphosphate.. Its function is as follows. DNA ligase involved in DNA non-homologous end joining (NHEJ); required for double-strand break (DSB) repair. The chain is DNA ligase 4 (LIG4) from Kluyveromyces lactis (strain ATCC 8585 / CBS 2359 / DSM 70799 / NBRC 1267 / NRRL Y-1140 / WM37) (Yeast).